The primary structure comprises 911 residues: Protein dead ringer (911 aa).

Disordered stretches follow at residues 1–44, 67–87, and 172–274; these read MQLR…DCDS, SGGG…LSHH, and HVTS…QNNG. Basic and acidic residues predominate over residues 19 to 34; that stretch reads IERDSDLGDDLSHGDR. Phosphoserine is present on serine 30. At threonine 35 the chain carries Phosphothreonine. Serine 44 bears the Phosphoserine mark. The segment covering 174 to 201 has biased composition (low complexity); the sequence is TSSPSGGNGSSYNGGTTPTNSSNSNATT. Residues 202–231 show a composition bias toward gly residues; it reads NGGGTAGPGGTGGSGGGGGGGGGGGGGVGG. Over residues 252–273 the composition is skewed to low complexity; it reads AANSASNSSTSSEASNSSQQNN. Residues 293-385 form the ARID domain; sequence DPKRKEFLDD…YLYPYECEKK (93 aa). Disordered stretches follow at residues 501-633, 662-775, and 826-877; these read GMPP…VGSG, PSMG…GKLN, and QSET…DQDM. Low complexity predominate over residues 512–550; the sequence is HQQQHSQQQQQQQHHHQQQQQQQSQQQHHLQQQRQRSQS. The segment covering 570 to 600 has biased composition (polar residues); the sequence is HNNNSPPGSAHTSPQQREALNLSDSPPNLTN. A phosphoserine mark is found at serine 592 and serine 594. The segment covering 601-621 has biased composition (basic and acidic residues); it reads IKREREREPTPEPVDQDDKFV. At serine 720 the chain carries Phosphoserine. The REKLES domain occupies 731-825; it reads TTGGSVGHRH…GVLVANVPLS (95 aa). Residues 737–751 are compositionally biased toward basic residues; sequence GHRHSSPVSTKKKGG. Acidic residues predominate over residues 841–853; it reads TVEEEKDEEEEEE. The span at 854–870 shows a compositional bias: basic and acidic residues; the sequence is PKAAEEESHRSPVKQEN.

In terms of tissue distribution, present in the pharyngeal muscles, hindgut epithelium, amnioserosa, ring gland, midgut-hindgut junction, posterior region of each brain lobe, longitudinal glial cells of the CNS and the salivary gland duct of germ-band retracted embryos.

The protein localises to the nucleus. In terms of biological role, transcription factor which is a downstream target of gcm and repo. Directly or indirectly activates the transcription of locos and pros, which are essential for the development of some glial cells. Plays an essential role in defining the cell shape and migration characteristics of longitudinal glia that enable them to establish a normal axon scaffold. This chain is Protein dead ringer (retn), found in Drosophila melanogaster (Fruit fly).